The chain runs to 206 residues: Thymidylate kinase (206 aa).

11-18 is a binding site for ATP; it reads GIDGAGKT.

It belongs to the thymidylate kinase family.

It carries out the reaction dTMP + ATP = dTDP + ADP. In terms of biological role, phosphorylation of dTMP to form dTDP in both de novo and salvage pathways of dTTP synthesis. The protein is Thymidylate kinase of Burkholderia cenocepacia (strain ATCC BAA-245 / DSM 16553 / LMG 16656 / NCTC 13227 / J2315 / CF5610) (Burkholderia cepacia (strain J2315)).